Reading from the N-terminus, the 295-residue chain is Aspartate carbamoyltransferase catalytic subunit (295 aa).

Carbamoyl phosphate-binding residues include R49 and T50. K77 contributes to the L-aspartate binding site. Residues R99, H127, and Q130 each coordinate carbamoyl phosphate. L-aspartate is bound by residues R161 and R212. 2 residues coordinate carbamoyl phosphate: G251 and P252.

The protein belongs to the aspartate/ornithine carbamoyltransferase superfamily. ATCase family. Heterododecamer (2C3:3R2) of six catalytic PyrB chains organized as two trimers (C3), and six regulatory PyrI chains organized as three dimers (R2).

It carries out the reaction carbamoyl phosphate + L-aspartate = N-carbamoyl-L-aspartate + phosphate + H(+). The protein operates within pyrimidine metabolism; UMP biosynthesis via de novo pathway; (S)-dihydroorotate from bicarbonate: step 2/3. Catalyzes the condensation of carbamoyl phosphate and aspartate to form carbamoyl aspartate and inorganic phosphate, the committed step in the de novo pyrimidine nucleotide biosynthesis pathway. In Campylobacter jejuni (strain RM1221), this protein is Aspartate carbamoyltransferase catalytic subunit.